The following is a 422-amino-acid chain: MAADKPHMNLAVIGHIDHGKSTFVGRLMYDAGAVPAHVIEKYKEEAKQKGKESFAFAWVMDSLKEERERGITIDIAHKRFDTDKYYFTVVDCPGHRDFVKNMITGASQADAAVLVVAAPDGVMAQTKEHIFLSRTLGINQLIVAINKMDAVEYSEKRYKEVVEQVSGILKMIGFKPGDIPFVPTSAFYGDNVVNHSEKTPWYKGVTMMEALNNLKVPEKPSTLPLRIPVEDAYTISGIGTVPVGRVETGTMKKGDKVVFMPGGAAGEVKSIEMHHEEIPQALPGDNIGWNVRGIGKADVRRGDVCGHTDNPPKVADTFVGQIVVLQHPSAITAGYTPVFHAHTSQIACQLIELNKKLDPKSGQVKEENPTFLKAGDAAIVTIKPTKPMVIEPVKEIPQLGRFAIRDMGMTIAAGMCMSVKQK.

One can recognise a tr-type G domain in the interval 5–221 (KPHMNLAVIG…NNLKVPEKPS (217 aa)). Positions 14 to 21 (GHIDHGKS) are G1. Residue 14 to 21 (GHIDHGKS) coordinates GTP. Mg(2+) is bound at residue serine 21. The G2 stretch occupies residues 70–74 (GITID). Residues 91 to 94 (DCPG) are G3. Residues 91 to 95 (DCPGH) and 146 to 149 (NKMD) contribute to the GTP site. The tract at residues 146–149 (NKMD) is G4. The segment at 185 to 187 (SAF) is G5.

This sequence belongs to the TRAFAC class translation factor GTPase superfamily. Classic translation factor GTPase family. EF-Tu/EF-1A subfamily.

It is found in the cytoplasm. It catalyses the reaction GTP + H2O = GDP + phosphate + H(+). Functionally, GTP hydrolase that promotes the GTP-dependent binding of aminoacyl-tRNA to the A-site of ribosomes during protein biosynthesis. In Methanosarcina barkeri (strain Fusaro / DSM 804), this protein is Elongation factor 1-alpha.